Consider the following 461-residue polypeptide: Bifunctional protein GlmU (461 aa).

A pyrophosphorylase region spans residues 1-232 (MNLQIIILAA…SFEVQGINNR (232 aa)). UDP-N-acetyl-alpha-D-glucosamine contacts are provided by residues 8–11 (LAAG), Lys22, Gln73, and 78–79 (GT). Residue Asp102 participates in Mg(2+) binding. 3 residues coordinate UDP-N-acetyl-alpha-D-glucosamine: Gly142, Glu157, and Asn230. Asn230 is a binding site for Mg(2+). A linker region spans residues 233–253 (QQLQQLERIWQQRAANQLMEK). The N-acetyltransferase stretch occupies residues 254-461 (GVTLADANRF…WKRPAKRERD (208 aa)). Residues Arg336 and Lys354 each contribute to the UDP-N-acetyl-alpha-D-glucosamine site. His366 acts as the Proton acceptor in catalysis. 2 residues coordinate UDP-N-acetyl-alpha-D-glucosamine: Tyr369 and Asn380. Residues Ala383, 389–390 (NY), Ser408, and Ala426 contribute to the acetyl-CoA site.

In the N-terminal section; belongs to the N-acetylglucosamine-1-phosphate uridyltransferase family. This sequence in the C-terminal section; belongs to the transferase hexapeptide repeat family. In terms of assembly, homotrimer. It depends on Mg(2+) as a cofactor.

It is found in the cytoplasm. The catalysed reaction is alpha-D-glucosamine 1-phosphate + acetyl-CoA = N-acetyl-alpha-D-glucosamine 1-phosphate + CoA + H(+). It catalyses the reaction N-acetyl-alpha-D-glucosamine 1-phosphate + UTP + H(+) = UDP-N-acetyl-alpha-D-glucosamine + diphosphate. It functions in the pathway nucleotide-sugar biosynthesis; UDP-N-acetyl-alpha-D-glucosamine biosynthesis; N-acetyl-alpha-D-glucosamine 1-phosphate from alpha-D-glucosamine 6-phosphate (route II): step 2/2. The protein operates within nucleotide-sugar biosynthesis; UDP-N-acetyl-alpha-D-glucosamine biosynthesis; UDP-N-acetyl-alpha-D-glucosamine from N-acetyl-alpha-D-glucosamine 1-phosphate: step 1/1. It participates in bacterial outer membrane biogenesis; LPS lipid A biosynthesis. Its function is as follows. Catalyzes the last two sequential reactions in the de novo biosynthetic pathway for UDP-N-acetylglucosamine (UDP-GlcNAc). The C-terminal domain catalyzes the transfer of acetyl group from acetyl coenzyme A to glucosamine-1-phosphate (GlcN-1-P) to produce N-acetylglucosamine-1-phosphate (GlcNAc-1-P), which is converted into UDP-GlcNAc by the transfer of uridine 5-monophosphate (from uridine 5-triphosphate), a reaction catalyzed by the N-terminal domain. This is Bifunctional protein GlmU from Legionella pneumophila (strain Lens).